The primary structure comprises 206 residues: Large ribosomal subunit protein uL4 (206 aa).

Residues 46–77 (GTRAQKDREQVRHSTKKPFKQKGTGNARAGMT) form a disordered region.

Belongs to the universal ribosomal protein uL4 family. In terms of assembly, part of the 50S ribosomal subunit.

Its function is as follows. One of the primary rRNA binding proteins, this protein initially binds near the 5'-end of the 23S rRNA. It is important during the early stages of 50S assembly. It makes multiple contacts with different domains of the 23S rRNA in the assembled 50S subunit and ribosome. Functionally, forms part of the polypeptide exit tunnel. The sequence is that of Large ribosomal subunit protein uL4 from Paracidovorax citrulli (strain AAC00-1) (Acidovorax citrulli).